Here is an 837-residue protein sequence, read N- to C-terminus: Katanin p80 WD40 repeat-containing subunit B1 homolog KTN80.4 (837 aa).

WD repeat units lie at residues 14–54 (AHSA…AILS), 57–96 (GHSSGIDSVTFDASEVLVAAGAASGTIKLWDLEEAKIVRT), 99–138 (GHRSNCISVDFHPFGEFFASGSLDTNLKIWDIRKKGCIHT), 141–182 (GHTR…TEFK), 184–222 (HEGQIQSLDFHPHEFLLATGSADRTVKFWDLETFELIGS), 225–265 (PETA…DGVD), and 267–304 (GWSRLSDMNVHEGKLLGCSYNQSCVGVWVVDLSRTEPC). Residues 115–131 (FFASGSLDTNLKIWDIR) carry the DWD box motif. 3 disordered regions span residues 307–328 (GDTAQSNGHPEKRSCSGRDPVV), 358–462 (GRLS…ANPV), and 501–614 (LQAA…LVIN). Composition is skewed to polar residues over residues 376 to 387 (IGRSSTSQNSES) and 412 to 450 (TFSSTGSLPGTPHRVSSTNVSKATSGVSTAVSNAATSRR). Over residues 509-520 (SPSSRNNPDLPD) the composition is skewed to low complexity. Composition is skewed to basic and acidic residues over residues 553 to 563 (ATERSINDFRY) and 580 to 595 (RNHDENYDLVSHRSNR).

The protein belongs to the WD repeat KATNB1 family. Component of KTN80-KTN1 complexes composed of a hexamer of KTN1-KTN80 heterodimers that sense microtubule (MT) geometry to confer precise MT severing. Interacts directly with AAA1/KTN1, and weakly with KTN80.1 and KTN80.3. In terms of tissue distribution, expressed in siliques, flowers, leaves, stems and roots.

The protein localises to the cytoplasm. The protein resides in the cytoskeleton. In terms of biological role, may participate in a complex which severs microtubules in an ATP-dependent manner. This activity may promote rapid reorganization of cellular microtubule arrays. Confers precision to microtubule (MT) severing by specific targeting of KTN1 to MT cleavage sites such as crossover or branching nucleation sites. Together with other KTN80s, regulates cell elongation by modulating MT organization. The protein is Katanin p80 WD40 repeat-containing subunit B1 homolog KTN80.4 of Arabidopsis thaliana (Mouse-ear cress).